The following is an 821-amino-acid chain: Fibroblast growth factor receptor 2 (821 aa).

The first 21 residues, 1–21 (MVSWGRFICLVLVTMATLSLA), serve as a signal peptide directing secretion. Residues 22 to 377 (RPSFSLVEDT…EITASPDYLE (356 aa)) lie on the Extracellular side of the membrane. In terms of domain architecture, Ig-like C2-type 1 spans 25 to 125 (FSLVEDTTLE…ETWIFMVNVT (101 aa)). C62 and C107 are disulfide-bonded. N-linked (GlcNAc...) asparagine glycans are attached at residues N83 and N123. Residues 129–151 (SSGDDEDDTDSSEDVVSENRSNQ) form a disordered region. The segment covering 131–144 (GDDEDDTDSSEDVV) has biased composition (acidic residues). A glycan (N-linked (GlcNAc...) asparagine) is linked at N147. 2 Ig-like C2-type domains span residues 154 to 247 (PYWT…YHLD) and 256 to 358 (PILQ…AWLT). The heparin-binding stretch occupies residues 161–178 (KMEKRLHACPAANTVKFR). C179 and C231 form a disulfide bridge. N-linked (GlcNAc...) asparagine glycosylation is found at N228, N241, N265, N297, N318, and N331. A disulfide bond links C278 and C342. The chain crosses the membrane as a helical span at residues 378–398 (IAIYCIGVFLIACMVVTVIFC). Topologically, residues 399 to 821 (RMKTTTKKPD…YPHINGSVKT (423 aa)) are cytoplasmic. Y466 is subject to Phosphotyrosine; by autocatalysis. A Protein kinase domain is found at 481 to 770 (LTLGKPLGEG…LTLTTNEEYL (290 aa)). ATP is bound by residues 487-495 (LGEGCFGQV), K517, 565-567 (EYA), and N571. Y586 and Y588 each carry phosphotyrosine; by autocatalysis. D626 serves as the catalytic Proton acceptor. Phosphotyrosine; by autocatalysis is present on residues Y656, Y657, and Y769. Position 780 is a phosphoserine (S780).

It belongs to the protein kinase superfamily. Tyr protein kinase family. Fibroblast growth factor receptor subfamily. Monomer. Homodimer after ligand binding. Interacts predominantly with FGF1 and FGF2, but can also interact with FGF3, FGF4, FGF6, FGF7, FGF8, FGF9, FGF10, FGF17, FGF18 and FGF22 (in vitro). Ligand specificity is determined by tissue-specific expression of isoforms, and differences in the third Ig-like domain are crucial for ligand specificity. Affinity for fibroblast growth factors (FGFs) is increased by heparan sulfate glycosaminoglycans that function as coreceptors. Likewise, KLB increases the affinity for FGF19 and FGF21. Interacts with PLCG1. Interacts with GRB2 and PAK4. Interacts with FLRT2. Post-translationally, autophosphorylated. Binding of FGF family members together with heparan sulfate proteoglycan or heparin promotes receptor dimerization and autophosphorylation on tyrosine residues. Autophosphorylation occurs in trans between the two FGFR molecules present in the dimer. In terms of processing, N-glycosylated in the endoplasmic reticulum. The N-glycan chains undergo further maturation to an Endo H-resistant form in the Golgi apparatus. Ubiquitinated. FGFR2 is rapidly ubiquitinated after autophosphorylation, leading to internalization and degradation. Subject to degradation both in lysosomes and by the proteasome.

It localises to the cell membrane. It is found in the golgi apparatus. The protein resides in the cytoplasmic vesicle. The enzyme catalyses L-tyrosyl-[protein] + ATP = O-phospho-L-tyrosyl-[protein] + ADP + H(+). Present in an inactive conformation in the absence of bound ligand. Ligand binding leads to dimerization and activation by autophosphorylation on tyrosine residues. Its function is as follows. Tyrosine-protein kinase that acts as a cell-surface receptor for fibroblast growth factors and plays an essential role in the regulation of cell proliferation, differentiation, migration and apoptosis, and in the regulation of embryonic development. Required for normal embryonic patterning, trophoblast function, limb bud development, lung morphogenesis, osteogenesis and skin development. Plays an essential role in the regulation of osteoblast differentiation, proliferation and apoptosis, and is required for normal skeleton development. Promotes cell proliferation in keratinocytes and immature osteoblasts, but promotes apoptosis in differentiated osteoblasts. Phosphorylates PLCG1, FRS2 and PAK4. Ligand binding leads to the activation of several signaling cascades. Activation of PLCG1 leads to the production of the cellular signaling molecules diacylglycerol and inositol 1,4,5-trisphosphate. Phosphorylation of FRS2 triggers recruitment of GRB2, GAB1, PIK3R1 and SOS1, and mediates activation of RAS, MAPK1/ERK2, MAPK3/ERK1 and the MAP kinase signaling pathway, as well as of the AKT1 signaling pathway. FGFR2 signaling is down-regulated by ubiquitination, internalization and degradation. Mutations that lead to constitutive kinase activation or impair normal FGFR2 maturation, internalization and degradation lead to aberrant signaling. Over-expressed FGFR2 promotes activation of STAT1. This Mus musculus (Mouse) protein is Fibroblast growth factor receptor 2 (Fgfr2).